A 139-amino-acid chain; its full sequence is S-protein homolog 14 (139 aa).

Residues Met-1–Ala-20 form the signal peptide. An N-linked (GlcNAc...) asparagine glycan is attached at Asn-136.

Belongs to the plant self-incompatibility (S1) protein family.

The protein localises to the secreted. The chain is S-protein homolog 14 from Arabidopsis thaliana (Mouse-ear cress).